The chain runs to 398 residues: Arylacetamide deacetylase (398 aa).

Over 1 to 5 the chain is Cytoplasmic; it reads MGKTI. Residues 6–26 form a helical; Signal-anchor for type II membrane protein membrane-spanning segment; that stretch reads SLLISVVLVAYYLYIPLPDAI. Over 27-398 the chain is Lumenal; sequence EEPWKVVWET…QYLSWLIKNL (372 aa). Positions 110–112 match the Involved in the stabilization of the negatively charged intermediate by the formation of the oxyanion hole motif; sequence HGG. Residues Cys115 and Cys339 are joined by a disulfide bond. Ser188 is a catalytic residue. An N-linked (GlcNAc...) asparagine glycan is attached at Asn281. Active-site residues include Asp342 and His372.

It belongs to the 'GDXG' lipolytic enzyme family. Post-translationally, N-glycosylated. Highest levels in liver with lower levels in jejunum and kidney.

Its subcellular location is the endoplasmic reticulum membrane. It localises to the microsome membrane. The enzyme catalyses a triacylglycerol + H2O = a diacylglycerol + a fatty acid + H(+). Displays cellular triglyceride lipase activity in liver, increases the levels of intracellular fatty acids derived from the hydrolysis of newly formed triglyceride stores and plays a role in very low-density lipoprotein assembly. Displays serine esterase activity in liver. Deacetylates a variety of arylacetamide substrates, including xenobiotic compounds and procarcinogens, converting them to the primary arylamide compounds and increasing their toxicity. The polypeptide is Arylacetamide deacetylase (Aadac) (Mus musculus (Mouse)).